The chain runs to 381 residues: Queuine tRNA-ribosyltransferase (381 aa).

Aspartate 96 serves as the catalytic Proton acceptor. Substrate is bound by residues 96-100, aspartate 150, glutamine 193, and glycine 220; that span reads DSGGF. Residues 251-257 are RNA binding; the sequence is GVGSPDS. The Nucleophile role is filled by aspartate 270. Residues 275 to 279 are RNA binding; important for wobble base 34 recognition; the sequence is TRIAR. Cysteine 308, cysteine 310, cysteine 313, and histidine 339 together coordinate Zn(2+).

Belongs to the queuine tRNA-ribosyltransferase family. As to quaternary structure, homodimer. Within each dimer, one monomer is responsible for RNA recognition and catalysis, while the other monomer binds to the replacement base PreQ1. Zn(2+) serves as cofactor.

The enzyme catalyses 7-aminomethyl-7-carbaguanine + guanosine(34) in tRNA = 7-aminomethyl-7-carbaguanosine(34) in tRNA + guanine. The protein operates within tRNA modification; tRNA-queuosine biosynthesis. In terms of biological role, catalyzes the base-exchange of a guanine (G) residue with the queuine precursor 7-aminomethyl-7-deazaguanine (PreQ1) at position 34 (anticodon wobble position) in tRNAs with GU(N) anticodons (tRNA-Asp, -Asn, -His and -Tyr). Catalysis occurs through a double-displacement mechanism. The nucleophile active site attacks the C1' of nucleotide 34 to detach the guanine base from the RNA, forming a covalent enzyme-RNA intermediate. The proton acceptor active site deprotonates the incoming PreQ1, allowing a nucleophilic attack on the C1' of the ribose to form the product. After dissociation, two additional enzymatic reactions on the tRNA convert PreQ1 to queuine (Q), resulting in the hypermodified nucleoside queuosine (7-(((4,5-cis-dihydroxy-2-cyclopenten-1-yl)amino)methyl)-7-deazaguanosine). In Lysinibacillus sphaericus (strain C3-41), this protein is Queuine tRNA-ribosyltransferase.